Here is a 145-residue protein sequence, read N- to C-terminus: Basic phospholipase A2 cPt09 (145 aa).

The first 21 residues, 1-21, serve as a signal peptide directing secretion; the sequence is MYPAHLLVLLAVCVSLLGAST. Residues 22–27 constitute a propeptide that is removed on maturation; that stretch reads IPPLPL. 7 cysteine pairs are disulfide-bonded: Cys38-Cys98, Cys54-Cys144, Cys56-Cys72, Cys71-Cys125, Cys78-Cys118, Cys87-Cys111, and Cys105-Cys116. Positions 55, 57, and 59 each coordinate Ca(2+). His75 is an active-site residue. Asp76 is a binding site for Ca(2+). Residue Asp119 is part of the active site.

Belongs to the phospholipase A2 family. Group I subfamily. D49 sub-subfamily. Ca(2+) is required as a cofactor. As to expression, expressed by the venom gland.

Its subcellular location is the secreted. The catalysed reaction is a 1,2-diacyl-sn-glycero-3-phosphocholine + H2O = a 1-acyl-sn-glycero-3-phosphocholine + a fatty acid + H(+). In terms of biological role, PLA2 catalyzes the calcium-dependent hydrolysis of the 2-acyl groups in 3-sn-phosphoglycerides. In Laticauda semifasciata (Black-banded sea krait), this protein is Basic phospholipase A2 cPt09.